The primary structure comprises 78 residues: Large ribosomal subunit protein bL28 (78 aa).

The protein belongs to the bacterial ribosomal protein bL28 family.

The polypeptide is Large ribosomal subunit protein bL28 (Psychrobacter arcticus (strain DSM 17307 / VKM B-2377 / 273-4)).